The sequence spans 76 residues: Small ribosomal subunit protein uS17 (76 aa).

The protein belongs to the universal ribosomal protein uS17 family. As to quaternary structure, part of the 30S ribosomal subunit.

Its function is as follows. One of the primary rRNA binding proteins, it binds specifically to the 5'-end of 16S ribosomal RNA. In Dinoroseobacter shibae (strain DSM 16493 / NCIMB 14021 / DFL 12), this protein is Small ribosomal subunit protein uS17.